Reading from the N-terminus, the 518-residue chain is MFKIMKDFTEQEKIIVLDFGSQYNQLITRRIREFGVYSELHPHTITVEEMKALNPTGIIFSGGPNSVYDEDAFRADERIFDMGIPILGICYGMQLMTTHFGGKVERAKDREYGKADIHVEKPNRLFAGLPTDQVVWMSHGDLVVEEPAGFEVTVTSKSCPIAGIADEERSLYGVQFHPEVRHSVYGNELLKNFALNVCGCKGDWTMENFSEVEIAKIQEIVGDKKVLLALSGGVDSSVVGVLIHKAIGDQLTCIFVDHGLLRKGEADQVMETLQGEFNMNIIKVDAKKRFMDKLAGVSDPEQKRKIIGNEFIYVFDDEANKLDGVEFLAQGTLYTDIIESGTATAQTIKSHHNVGGLPEDMQFKLIEPLNTLFKDEVRALGTELGMPDAIVWRQPFPGPGLGIRVLGEITEEKLEIVRDSDYILREEIKNAGLEREIWQYFTALPNIRSVGVMGDGRTYDHTVVVRAVTSIDGMTADWARIPWDVLEKISVRIVNEVDHVNRVVYDITSKPPATVEWE.

In terms of domain architecture, Glutamine amidotransferase type-1 spans 13-203 (KIIVLDFGSQ…ALNVCGCKGD (191 aa)). The Nucleophile role is filled by Cys90. Active-site residues include His177 and Glu179. One can recognise a GMPS ATP-PPase domain in the interval 204 to 393 (WTMENFSEVE…LGMPDAIVWR (190 aa)). 231–237 (SGGVDSS) serves as a coordination point for ATP.

As to quaternary structure, homodimer.

It catalyses the reaction XMP + L-glutamine + ATP + H2O = GMP + L-glutamate + AMP + diphosphate + 2 H(+). It participates in purine metabolism; GMP biosynthesis; GMP from XMP (L-Gln route): step 1/1. Functionally, catalyzes the synthesis of GMP from XMP. This Listeria monocytogenes serovar 1/2a (strain ATCC BAA-679 / EGD-e) protein is GMP synthase [glutamine-hydrolyzing].